Here is a 244-residue protein sequence, read N- to C-terminus: 3-deoxy-manno-octulosonate cytidylyltransferase (244 aa).

Belongs to the KdsB family.

It is found in the cytoplasm. The enzyme catalyses 3-deoxy-alpha-D-manno-oct-2-ulosonate + CTP = CMP-3-deoxy-beta-D-manno-octulosonate + diphosphate. Its pathway is nucleotide-sugar biosynthesis; CMP-3-deoxy-D-manno-octulosonate biosynthesis; CMP-3-deoxy-D-manno-octulosonate from 3-deoxy-D-manno-octulosonate and CTP: step 1/1. It participates in bacterial outer membrane biogenesis; lipopolysaccharide biosynthesis. In terms of biological role, activates KDO (a required 8-carbon sugar) for incorporation into bacterial lipopolysaccharide in Gram-negative bacteria. This is 3-deoxy-manno-octulosonate cytidylyltransferase from Rickettsia canadensis (strain McKiel).